We begin with the raw amino-acid sequence, 285 residues long: Tryptophan synthase alpha chain (285 aa).

Catalysis depends on proton acceptor residues E53 and D64.

Belongs to the TrpA family. As to quaternary structure, tetramer of two alpha and two beta chains.

It carries out the reaction (1S,2R)-1-C-(indol-3-yl)glycerol 3-phosphate + L-serine = D-glyceraldehyde 3-phosphate + L-tryptophan + H2O. Its pathway is amino-acid biosynthesis; L-tryptophan biosynthesis; L-tryptophan from chorismate: step 5/5. The alpha subunit is responsible for the aldol cleavage of indoleglycerol phosphate to indole and glyceraldehyde 3-phosphate. The protein is Tryptophan synthase alpha chain of Bordetella bronchiseptica (strain ATCC BAA-588 / NCTC 13252 / RB50) (Alcaligenes bronchisepticus).